Here is an 815-residue protein sequence, read N- to C-terminus: uncharacterized protein (815 aa).

The N-terminal stretch at methionine 1–alanine 25 is a signal peptide. The next 6 membrane-spanning stretches (helical) occupy residues phenylalanine 127 to glycine 147, isoleucine 157 to methionine 177, serine 311 to phenylalanine 331, phenylalanine 333 to alanine 353, valine 372 to isoleucine 392, and glycine 401 to histidine 421. The disordered stretch occupies residues lysine 483 to arginine 815. Positions histidine 513 to serine 543 are enriched in polar residues. 2 stretches are compositionally biased toward basic and acidic residues: residues lysine 544–glutamine 563 and glutamine 599–valine 614. The span at lysine 619 to alanine 630 shows a compositional bias: polar residues. The span at glutamate 648 to glutamine 658 shows a compositional bias: basic and acidic residues. Polar residues predominate over residues glutamate 665–phenylalanine 678. Basic and acidic residues predominate over residues lysine 696–glutamine 705. Residues serine 720–alanine 732 are compositionally biased toward polar residues. Over residues asparagine 734–glutamine 757 the composition is skewed to basic and acidic residues. Over residues proline 773 to leucine 793 the composition is skewed to polar residues. Positions isoleucine 796 to arginine 815 are enriched in basic and acidic residues.

It is found in the cell membrane. This is an uncharacterized protein from Bacillus subtilis (strain 168).